The chain runs to 235 residues: Ribosomal RNA large subunit methyltransferase E (235 aa).

Positions 76, 78, 99, 115, and 139 each coordinate S-adenosyl-L-methionine. Catalysis depends on K179, which acts as the Proton acceptor.

The protein belongs to the class I-like SAM-binding methyltransferase superfamily. RNA methyltransferase RlmE family.

The protein localises to the cytoplasm. It carries out the reaction uridine(2552) in 23S rRNA + S-adenosyl-L-methionine = 2'-O-methyluridine(2552) in 23S rRNA + S-adenosyl-L-homocysteine + H(+). Functionally, specifically methylates the uridine in position 2552 of 23S rRNA at the 2'-O position of the ribose in the fully assembled 50S ribosomal subunit. The protein is Ribosomal RNA large subunit methyltransferase E of Rhodopseudomonas palustris (strain BisA53).